The sequence spans 975 residues: Homeobox protein cut-like 1 (975 aa).

Positions 1-73 form a DNA-binding region, CUT 1; the sequence is SRQVKEQLIK…ILALRSIQGR (73 aa). Disordered regions lie at residues 90–113 and 126–148; these read PKRRNGSEGNITTRIRASETGSDE and LQVQKTAEPAQPSSTSSSGTSDD. The stretch at 113–169 forms a coiled coil; it reads EAIKSILEQAKRELQVQKTAEPAQPSSTSSSGTSDDAIRSILQQARREMEAQQAALD. A Phosphoserine modification is found at serine 207. The tract at residues 209–246 is disordered; the sequence is KKPPTAPDTSASTLPNPPALKKESQDAPGLDLPGAAES. Residues lysine 229, lysine 255, and lysine 286 each participate in a glycyl lysine isopeptide (Lys-Gly) (interchain with G-Cter in SUMO2) cross-link. Over residues 262–297 the composition is skewed to basic and acidic residues; that stretch reads GVWKDHWWSTVQPERKSAAPPEDAKSEEAGGTKEKG. A disordered region spans residues 262–369; sequence GVWKDHWWST…SKPAKPSVPP (108 aa). Over residues 328–351 the composition is skewed to polar residues; it reads RTPQSSELSLTGASRSETPQNSPL. Serine 349 bears the Phosphoserine mark. Residues 374-461 constitute a DNA-binding region (CUT 2); the sequence is QYEIYMYQEV…QGVLPVQGQQ (88 aa). Residues 476–489 are compositionally biased toward polar residues; sequence LQQGCVSSESTPKT. Residues 476–549 are disordered; the sequence is LQQGCVSSES…SQPATPLPLS (74 aa). A compositionally biased stretch (low complexity) spans 490 to 506; that stretch reads SASCSPAPESPMSSSES. 2 positions are modified to phosphoserine: serine 499 and serine 509. A DNA-binding region (CUT 3) is located at residues 557–644; it reads QELVAMSPEL…VEKLMDMKRM (88 aa). Residues 652–687 are disordered; the sequence is RRHSSVSDSQPCEPPSVGIDYSQGASPQPQHQLKKP. The segment at residues 684–743 is a DNA-binding region (homeobox); sequence LKKPRVVLAPEEKEALKRAYQQKPYPSPKTIEELATQLNLKTSTVINWFHNYRSRIRREL. Phosphoserine is present on serine 710. A Glycyl lysine isopeptide (Lys-Gly) (interchain with G-Cter in SUMO2) cross-link involves residue lysine 724. A disordered region spans residues 752-949; sequence SQGQAGARHS…DSRDNPLRKK (198 aa). Low complexity predominate over residues 756-773; that stretch reads AGARHSPSARSSGAAPSS. At serine 777 the chain carries Phosphoserine. Low complexity predominate over residues 780 to 813; that stretch reads GVEAAEGPGAADAEESAPAAAAKSQGGPAEAAVA. The span at 838–847 shows a compositional bias: gly residues; sequence PGRRGGGGPA. The span at 850–860 shows a compositional bias: low complexity; that stretch reads APAAPAAAARG. The span at 861–890 shows a compositional bias: basic residues; sequence PSRRPGARAKPRRRRRRRRRHARGGGRRYL. The span at 907–929 shows a compositional bias: low complexity; it reads RSSALPSTSAPAAARRPSSLQSL. Serine 925 carries the post-translational modification Phosphoserine. A compositionally biased stretch (basic and acidic residues) spans 937 to 946; sequence GARDSRDNPL. 2 positions are modified to phosphoserine: serine 956 and serine 966.

It belongs to the CUT homeobox family. In terms of assembly, interacts with BANP. In terms of processing, as cells progress into S phase, a fraction of CUX1 molecules is proteolytically processed into N-terminally truncated proteins of 110 kDa by CTSL. Cell cycle-dependent processing of CUX1 serves to generate a CDP/Cux p110 with distinct DNA binding and transcriptional properties. Post-translationally, phosphorylated by PKA. As to expression, a broad pattern of expression observed in tissues of diverse origins, such as cartilage, liver, brain, lung, heart and skeletal muscle. There are 2 distinct protein species: the larger one (230-250 kDa) is found mainly in adult brain, lung and heart, and the smaller one (180-190 kDa) predominates in early embryonic tissues.

Its subcellular location is the nucleus. In terms of biological role, transcription factor involved in the control of neuronal differentiation in the brain. Regulates dendrite development and branching, and dendritic spine formation in cortical layers II-III. Also involved in the control of synaptogenesis. In addition, it has probably a broad role in mammalian development as a repressor of developmentally regulated gene expression. May act by preventing binding of positively-activing CCAAT factors to promoters. Component of nf-munr repressor; binds to the matrix attachment regions (MARs) (5' and 3') of the immunoglobulin heavy chain enhancer. Represses T-cell receptor (TCR) beta enhancer function by binding to MARbeta, an ATC-rich DNA sequence located upstream of the TCR beta enhancer. Binds to the TH enhancer; may require the basic helix-loop-helix protein TCF4 as a coactivator. Plays a role in cell cycle progression, in particular at the G1/S transition. As cells progress into S phase, a fraction of CUX1 molecules is proteolytically processed into N-terminally truncated proteins of 110 kDa. While CUX1 only transiently binds to DNA and carries the CCAAT-displacement activity, CDP/Cux p110 makes a stable interaction with DNA and stimulates expression of genes such as POLA1. This chain is Homeobox protein cut-like 1 (CUX1), found in Canis lupus familiaris (Dog).